A 498-amino-acid chain; its full sequence is Cysteine--tRNA ligase (498 aa).

Residue Cys44 participates in Zn(2+) binding. The 'HIGH' region motif lies at 46–56 (PTVYSDAHLGH). Residues Cys235, His260, and Glu264 each coordinate Zn(2+). The 'KMSKS' region signature appears at 291 to 295 (KMSKS). Residue Lys294 participates in ATP binding.

This sequence belongs to the class-I aminoacyl-tRNA synthetase family. As to quaternary structure, monomer. The cofactor is Zn(2+).

Its subcellular location is the cytoplasm. It carries out the reaction tRNA(Cys) + L-cysteine + ATP = L-cysteinyl-tRNA(Cys) + AMP + diphosphate. This is Cysteine--tRNA ligase (cysS) from Deinococcus radiodurans (strain ATCC 13939 / DSM 20539 / JCM 16871 / CCUG 27074 / LMG 4051 / NBRC 15346 / NCIMB 9279 / VKM B-1422 / R1).